Consider the following 565-residue polypeptide: UV-stimulated scaffold protein A homolog (565 aa).

The tract at residues 11 to 156 is VHS-like; sequence RKNLNRILQE…VTLRKTKFVD (146 aa). Residues 155 to 215 are a coiled coil; sequence VDYENGEKKI…ELETTMEMLV (61 aa). Residues 441–468 form a UVSSA-type zinc finger; it reads DRECLAKLPSGALCKRKDMFKCPLHGPL. Zn(2+) contacts are provided by Cys-444, Cys-454, Cys-462, and His-465. Positions 480–510 form a coiled coil; it reads DEDRLKEIDRKERKRLKEAEEFSRKIVKEYE. Disordered stretches follow at residues 510 to 530 and 542 to 565; these read ESKT…SRLQ and VSAD…FSHL.

This sequence belongs to the UVSSA family.

It is found in the chromosome. Factor involved in transcription-coupled nucleotide excision repair (TC-NER) in response to UV damage. TC-NER allows RNA polymerase II-blocking lesions to be rapidly removed from the transcribed strand of active genes. The chain is UV-stimulated scaffold protein A homolog from Caenorhabditis briggsae.